A 423-amino-acid chain; its full sequence is RNA polymerase sigma factor SigA (423 aa).

Positions 1-76 are disordered; the sequence is MKKSKRKNAQ…EEDLPIPKIS (76 aa). Residues 21 to 70 are compositionally biased toward acidic residues; it reads VQEEAEELPEFPEGEPDPDLEDPDLALEDDLLDLPEEGEGLDLEEEEEDL. A sigma-70 factor domain-1 region spans residues 78–113; the sequence is SDPVRQYLHEIGQVPLLTLEEEVELARKVEEGMEAI. The tract at residues 187–257 is sigma-70 factor domain-2; that stretch reads LIEANLRLVV…NRAIADQART (71 aa). Positions 211 to 214 match the Interaction with polymerase core subunit RpoC motif; that stretch reads DLIQ. The interval 266 to 344 is sigma-70 factor domain-3; the sequence is ETINKLSRTA…DEHLPSPVDA (79 aa). Residues 357 to 409 form a sigma-70 factor domain-4 region; it reads ALSKLSEREAMVLKLRKGLIDGREHTLEEVGAFFGVTRERIRQIENKALRKLK. A DNA-binding region (H-T-H motif) is located at residues 383–402; that stretch reads LEEVGAFFGVTRERIRQIEN.

The protein belongs to the sigma-70 factor family. RpoD/SigA subfamily. As to quaternary structure, interacts transiently with the RNA polymerase catalytic core formed by RpoA, RpoB, RpoC and RpoZ (2 alpha, 1 beta, 1 beta' and 1 omega subunit) to form the RNA polymerase holoenzyme that can initiate transcription.

The protein localises to the cytoplasm. Sigma factors are initiation factors that promote the attachment of RNA polymerase to specific initiation sites and are then released. This sigma factor is the primary sigma factor during exponential growth. This is RNA polymerase sigma factor SigA from Thermus thermophilus (strain ATCC BAA-163 / DSM 7039 / HB27).